The primary structure comprises 641 residues: Probable potassium transport system protein Kup (641 aa).

The segment covering 1 to 14 (MALDSESSASNRQG) has biased composition (polar residues). The segment at 1-20 (MALDSESSASNRQGSRNEQD) is disordered. Transmembrane regions (helical) follow at residues 29-49 (LCLT…LYAF), 69-89 (ILSL…LLII), 120-140 (VLIV…MITP), 156-176 (PQLT…LFMV), 188-208 (FGPI…NGII), 236-256 (VLGG…DMGH), 267-287 (FALV…LLLL), 307-327 (LVGL…SGVF), 355-375 (VYVP…VLHF), 384-404 (AFGI…FFVM), 410-430 (WNIL…LAFF), and 437-457 (ITDG…LMIT).

The protein belongs to the HAK/KUP transporter (TC 2.A.72) family.

It localises to the cell inner membrane. The enzyme catalyses K(+)(in) + H(+)(in) = K(+)(out) + H(+)(out). Transport of potassium into the cell. Likely operates as a K(+):H(+) symporter. This chain is Probable potassium transport system protein Kup, found in Nitrosomonas eutropha (strain DSM 101675 / C91 / Nm57).